The chain runs to 395 residues: Zinc-regulated GTPase metalloprotein activator 1E (395 aa).

A disordered region spans residues 1–22 (MLPAVGSVDEEEDPAEEDCPEL). Residues 8-20 (VDEEEDPAEEDCP) show a composition bias toward acidic residues. Residues 17 to 24 (EDCPELVP) carry the psi-PxLVp motif motif. A GTP-binding site is contributed by 49 to 56 (GYLGAGKT). Zn(2+) contacts are provided by cysteine 107, cysteine 109, and cysteine 110. Positions 107 to 110 (CLCC) match the CXCC motif motif. Residues 110–114 (CSVKD) and 203–206 (NKTD) contribute to the GTP site. The CobW C-terminal domain maps to 274–377 (IVTITFEVPG…ILKQLFIATV (104 aa)).

Belongs to the SIMIBI class G3E GTPase family. ZNG1 subfamily.

It localises to the nucleus. It catalyses the reaction GTP + H2O = GDP + phosphate + H(+). Functionally, zinc chaperone that directly transfers zinc cofactor to target metalloproteins, thereby activating them. Catalyzes zinc insertion into the active site of methionine aminopeptidase METAP1, which function to cleave the initiator methionine from polypeptides during or after protein translation. Mechanistically, the N-terminal psi-PxLVp motif binds to the C6H2-type zinc finger of inactive form of METAP1. After formation of the docked complex, zinc is transferred from the CXCC motif in the GTPase domain of ZNG1E to the zinc binding site in the peptidase domain of METAP1 in a process requiring GTP hydrolysis. GTP/GDP exchange is required for release of active METAP1. The chain is Zinc-regulated GTPase metalloprotein activator 1E from Homo sapiens (Human).